The sequence spans 626 residues: UvrABC system protein C (626 aa).

Residues 20 to 97 (ECSGVYKMLD…IKKFQPKFNI (78 aa)) enclose the GIY-YIG domain. The 36-residue stretch at 207 to 242 (IALQANLSKKMQELSSQMRFEEAAEIRDRIKALSYV) folds into the UVR domain.

It belongs to the UvrC family. Interacts with UvrB in an incision complex.

The protein localises to the cytoplasm. Functionally, the UvrABC repair system catalyzes the recognition and processing of DNA lesions. UvrC both incises the 5' and 3' sides of the lesion. The N-terminal half is responsible for the 3' incision and the C-terminal half is responsible for the 5' incision. This Rickettsia prowazekii (strain Madrid E) protein is UvrABC system protein C.